A 181-amino-acid chain; its full sequence is Transcription antitermination protein NusB (181 aa).

The disordered stretch occupies residues 1 to 36 (MTEDNNKAAGAKPRPARQVRTGLTSTGARKASAKSN).

The protein belongs to the NusB family.

Its function is as follows. Involved in transcription antitermination. Required for transcription of ribosomal RNA (rRNA) genes. Binds specifically to the boxA antiterminator sequence of the ribosomal RNA (rrn) operons. This chain is Transcription antitermination protein NusB, found in Variovorax paradoxus (strain S110).